We begin with the raw amino-acid sequence, 162 residues long: Large ribosomal subunit protein uL22c (162 aa).

Belongs to the universal ribosomal protein uL22 family. As to quaternary structure, part of the 50S ribosomal subunit.

The protein localises to the plastid. It localises to the chloroplast. Its function is as follows. This protein binds specifically to 23S rRNA. In terms of biological role, the globular domain of the protein is located near the polypeptide exit tunnel on the outside of the subunit, while an extended beta-hairpin is found that lines the wall of the exit tunnel in the center of the 70S ribosome. This Cucumis sativus (Cucumber) protein is Large ribosomal subunit protein uL22c (rpl22).